The sequence spans 230 residues: Ion-translocating oxidoreductase complex subunit E (230 aa).

5 helical membrane passes run 39-59 (LGLG…VSLI), 69-89 (IPVF…LMNA), 93-113 (GLYL…IIIG), 125-145 (LPAA…LVVL), and 182-202 (SFLL…LIAL).

This sequence belongs to the NqrDE/RnfAE family. As to quaternary structure, the complex is composed of six subunits: RnfA, RnfB, RnfC, RnfD, RnfE and RnfG.

It is found in the cell inner membrane. Its function is as follows. Part of a membrane-bound complex that couples electron transfer with translocation of ions across the membrane. This Vibrio vulnificus (strain YJ016) protein is Ion-translocating oxidoreductase complex subunit E.